Here is a 391-residue protein sequence, read N- to C-terminus: Ferrochelatase (391 aa).

Residues His196 and Glu281 each coordinate Fe cation.

This sequence belongs to the ferrochelatase family.

It localises to the cytoplasm. The enzyme catalyses heme b + 2 H(+) = protoporphyrin IX + Fe(2+). Its pathway is porphyrin-containing compound metabolism; protoheme biosynthesis; protoheme from protoporphyrin-IX: step 1/1. Functionally, catalyzes the ferrous insertion into protoporphyrin IX. The chain is Ferrochelatase from Prochlorococcus marinus (strain MIT 9312).